A 358-amino-acid polypeptide reads, in one-letter code: Type II restriction enzyme SacI (358 aa).

It carries out the reaction Endonucleolytic cleavage of DNA to give specific double-stranded fragments with terminal 5'-phosphates.. Functionally, a subtype P restriction enzyme that recognizes the double-stranded sequence 5'-GAGCTC-3' and cleaves after T-5. The polypeptide is Type II restriction enzyme SacI (Streptomyces achromogenes).